A 346-amino-acid polypeptide reads, in one-letter code: Annexin A1 (346 aa).

Ser-5 is modified (phosphoserine; by TRPM7). Gln-19 participates in a covalent cross-link: Isoglutamyl lysine isopeptide (Gln-Lys) (interchain with K-?). A Phosphotyrosine; by EGFR modification is found at Tyr-21. Position 27 is a phosphoserine; by PKC (Ser-27). Phosphoserine occurs at positions 34 and 37. Annexin repeat units follow at residues Phe-42 to Lys-113, Thr-114 to Lys-185, Asp-197 to Lys-269, and Ser-273 to Gly-344. Position 58 is an N6-acetyllysine (Lys-58). The Ca(2+) site is built by Gly-59, Val-60, Glu-62, Lys-97, Leu-100, Glu-105, Met-127, Gly-129, Gly-131, Thr-132, and Glu-134. Thr-136 carries the post-translational modification Phosphothreonine. Ca(2+) contacts are provided by Asp-171, Gly-210, and Arg-213. Lys-214 is covalently cross-linked (Glycyl lysine isopeptide (Lys-Gly) (interchain with G-Cter in SUMO1); alternate). Lys-214 participates in a covalent cross-link: Glycyl lysine isopeptide (Lys-Gly) (interchain with G-Cter in SUMO2); alternate. A Ca(2+)-binding site is contributed by Gly-215. At Lys-239 the chain carries N6-acetyllysine. Asp-253, Glu-255, and Leu-256 together coordinate Ca(2+). Lys-257 participates in a covalent cross-link: Glycyl lysine isopeptide (Lys-Gly) (interchain with G-Cter in SUMO1). 4 residues coordinate Ca(2+): Glu-261, Met-286, Gly-288, and Gly-290. N6-acetyllysine is present on Lys-312. An intrachain disulfide couples Cys-324 to Cys-343. Positions 328, 330, and 331 each coordinate Ca(2+). A Glycyl lysine isopeptide (Lys-Gly) (interchain with G-Cter in SUMO1) cross-link involves residue Lys-332. Glu-336 contributes to the Ca(2+) binding site.

Belongs to the annexin family. Homodimer; non-covalently linked. Homodimer; linked by transglutamylation. Homodimers linked by transglutamylation are observed in placenta, but not in other tissues. Interacts with S100A11. Heterotetramer, formed by two molecules each of S100A11 and ANXA1. Interacts with DYSF. Interacts with EGFR. Phosphorylated by protein kinase C, EGFR and TRPM7. Phosphorylated in response to EGF treatment. In terms of processing, sumoylated. Post-translationally, proteolytically cleaved by cathepsin CTSG to release the active N-terminal peptide Ac2-26.

The protein localises to the nucleus. Its subcellular location is the cytoplasm. It is found in the cell projection. The protein resides in the cilium. It localises to the basolateral cell membrane. The protein localises to the lateral cell membrane. Its subcellular location is the cell membrane. It is found in the apical cell membrane. The protein resides in the membrane. It localises to the endosome membrane. The protein localises to the secreted. Its subcellular location is the extracellular space. It is found in the early endosome. The protein resides in the cytoplasmic vesicle membrane. It localises to the extracellular exosome. The protein localises to the cytoplasmic vesicle. Its subcellular location is the secretory vesicle lumen. It is found in the phagocytic cup. Functionally, plays important roles in the innate immune response as effector of glucocorticoid-mediated responses and regulator of the inflammatory process. Has anti-inflammatory activity. Plays a role in glucocorticoid-mediated down-regulation of the early phase of the inflammatory response. Contributes to the adaptive immune response by enhancing signaling cascades that are triggered by T-cell activation, regulates differentiation and proliferation of activated T-cells. Promotes the differentiation of T-cells into Th1 cells and negatively regulates differentiation into Th2 cells. Has no effect on unstimulated T-cells. Negatively regulates hormone exocytosis via activation of the formyl peptide receptors and reorganization of the actin cytoskeleton. Has high affinity for Ca(2+) and can bind up to eight Ca(2+) ions. Displays Ca(2+)-dependent binding to phospholipid membranes. Plays a role in the formation of phagocytic cups and phagosomes. Plays a role in phagocytosis by mediating the Ca(2+)-dependent interaction between phagosomes and the actin cytoskeleton. In terms of biological role, functions at least in part by activating the formyl peptide receptors and downstream signaling cascades. Promotes chemotaxis of granulocytes and monocytes via activation of the formyl peptide receptors. Promotes rearrangement of the actin cytoskeleton, cell polarization and cell migration. Promotes resolution of inflammation and wound healing. Acts via neutrophil N-formyl peptide receptors to enhance the release of CXCL2. The sequence is that of Annexin A1 (ANXA1) from Cavia cutleri (Guinea pig).